The sequence spans 307 residues: Mitochondrial glycine transporter (307 aa).

Solcar repeat units lie at residues 8-87, 115-199, and 221-305; these read PRNS…MRSS, LTMY…SKQL, and TSTT…LVKR. Helical transmembrane passes span 14–39, 62–88, 121–146, 174–197, 225–251, and 280–298; these read LIGG…TRIQ, GTLP…RSSL, LLTG…VRYE, GFGA…EKSK, VNTT…KTRM, and GLSM…AWGI.

It belongs to the mitochondrial carrier (TC 2.A.29) family. SLC25A38 subfamily.

The protein resides in the mitochondrion. It is found in the mitochondrion inner membrane. It catalyses the reaction glycine(in) = glycine(out). Mitochondrial glycine transporter that imports glycine into the mitochondrial matrix. Plays an important role in providing glycine for the first enzymatic step in heme biosynthesis, the condensation of glycine with succinyl-CoA to produce 5-aminolevulinate (ALA) in the mitochondrial matrix. The polypeptide is Mitochondrial glycine transporter (Saccharomyces cerevisiae (strain ATCC 204508 / S288c) (Baker's yeast)).